The chain runs to 124 residues: Large ribosomal subunit protein uL14 (124 aa).

The protein belongs to the universal ribosomal protein uL14 family. In terms of assembly, part of the 50S ribosomal subunit. Forms a cluster with proteins L3 and L19. In the 70S ribosome, L14 and L19 interact and together make contacts with the 16S rRNA in bridges B5 and B8.

Functionally, binds to 23S rRNA. Forms part of two intersubunit bridges in the 70S ribosome. This Mycoplasmoides gallisepticum (strain R(low / passage 15 / clone 2)) (Mycoplasma gallisepticum) protein is Large ribosomal subunit protein uL14.